A 496-amino-acid chain; its full sequence is MLLNQQLVQQFVTQAIAFGDYEQEDNIYIQNQLLRILNAIGIDVDNESPLNQDATANAIAQYWIEQAVNENYLEDALYKKEIVEAQILDLITPRPSVINRNFVEAYKKSPETATNYFYEITKRNHYVKEDAIANNINYEVETEYGDIEITINLSKPEKDAKQIAKAKAEPAKHYPKCALCIENEGYQGSVTQAARTNHRIIRLKLDGKSWGFQYSPYAYFPEHSIVLSEHHVPMEINKQTFVNLLAFIEQFPHYFIGSNADIPLVGGSILSHNHYQAGKHVFPMDNAAEIERFTMNQFSSVTASTLNWPMSVIRLKSENRDELINAATYVMNTWNQYSDETIDVRAFSKDGERHHTVTPIARYRQSQYELDIVLRDNQTSEVFPDGIFHPHEDVQHIKKENIGLIEVMGTAILPGRLKEELQQVKTYLVGDNQFDLGIHQQWAENMKRTYDINKQNVDDIVDKEVGYKFKRVLEDAGVFKNTDTGRQAFKRFIKHL.

It belongs to the galactose-1-phosphate uridylyltransferase type 2 family.

The protein resides in the cytoplasm. It catalyses the reaction alpha-D-galactose 1-phosphate + UDP-alpha-D-glucose = alpha-D-glucose 1-phosphate + UDP-alpha-D-galactose. It participates in carbohydrate metabolism; galactose metabolism. This is Galactose-1-phosphate uridylyltransferase from Staphylococcus saprophyticus subsp. saprophyticus (strain ATCC 15305 / DSM 20229 / NCIMB 8711 / NCTC 7292 / S-41).